Here is a 78-residue protein sequence, read N- to C-terminus: MKLTCVLIIAVLCLTVCQLITADYLRDKQKYRSVRLRDGMLNFKGSRQCADLGEECYTRFCCPGLRCKDLQVPTCLLA.

A signal peptide spans Met1–Ala22. A propeptide spanning residues Asp23–Arg47 is cleaved from the precursor. A Pyrrolidone carboxylic acid modification is found at Gln48. Disulfide bonds link Cys49-Cys62, Cys56-Cys67, and Cys61-Cys75.

It belongs to the conotoxin O1 superfamily. As to expression, expressed by the venom duct.

The protein resides in the secreted. This is Conotoxin ArMKLT2-0313 from Conus arenatus (Sand-dusted cone).